A 181-amino-acid polypeptide reads, in one-letter code: Oligoribonuclease (181 aa).

Positions 8–171 (LIWIDLEMTG…DDIRESVAEL (164 aa)) constitute an Exonuclease domain. Tyrosine 129 is a catalytic residue.

The protein belongs to the oligoribonuclease family. Homodimer.

Its subcellular location is the cytoplasm. Its function is as follows. 3'-to-5' exoribonuclease specific for small oligoribonucleotides. This chain is Oligoribonuclease, found in Escherichia coli O139:H28 (strain E24377A / ETEC).